Here is a 912-residue protein sequence, read N- to C-terminus: Effector protein hopAE1 (912 aa).

Residues 1 to 13 (MMPSQITRSSHSS) are compositionally biased toward polar residues. Residues 1–32 (MMPSQITRSSHSSLPEVAPASGDATGVSEQTP) form a disordered region.

This sequence belongs to the HopW family.

It localises to the secreted. This Pseudomonas savastanoi pv. phaseolicola (strain 1448A / Race 6) (Pseudomonas syringae pv. phaseolicola (strain 1448A / Race 6)) protein is Effector protein hopAE1 (hopAE1).